Consider the following 240-residue polypeptide: Dihydromonapterin reductase (240 aa).

Tyr152 (proton acceptor) is an active-site residue.

The protein belongs to the short-chain dehydrogenases/reductases (SDR) family. FolM subfamily.

It catalyses the reaction (6S)-5,6,7,8-tetrahydrofolate + NADP(+) = 7,8-dihydrofolate + NADPH + H(+). It carries out the reaction 7,8-dihydromonapterin + NADPH + H(+) = 5,6,7,8-tetrahydromonapterin + NADP(+). In terms of biological role, catalyzes the reduction of dihydromonapterin to tetrahydromonapterin. Also has lower activity with dihydrofolate. The protein is Dihydromonapterin reductase (folM) of Escherichia coli O139:H28 (strain E24377A / ETEC).